The chain runs to 72 residues: Translation initiation factor IF-1 (72 aa).

The 72-residue stretch at 1–72 (MIKEDNIEMH…SKGRIIFRSR (72 aa)) folds into the S1-like domain.

This sequence belongs to the IF-1 family. In terms of assembly, component of the 30S ribosomal translation pre-initiation complex which assembles on the 30S ribosome in the order IF-2 and IF-3, IF-1 and N-formylmethionyl-tRNA(fMet); mRNA recruitment can occur at any time during PIC assembly.

It localises to the cytoplasm. One of the essential components for the initiation of protein synthesis. Stabilizes the binding of IF-2 and IF-3 on the 30S subunit to which N-formylmethionyl-tRNA(fMet) subsequently binds. Helps modulate mRNA selection, yielding the 30S pre-initiation complex (PIC). Upon addition of the 50S ribosomal subunit IF-1, IF-2 and IF-3 are released leaving the mature 70S translation initiation complex. This chain is Translation initiation factor IF-1, found in Blochmanniella floridana.